Consider the following 26-residue polypeptide: Hemocyanin subunit B (26 aa).

This sequence belongs to the tyrosinase family. Hemocyanin subfamily. Hemolymph.

Its subcellular location is the secreted. It is found in the extracellular space. Its function is as follows. Hemocyanins are copper-containing oxygen carriers occurring freely dissolved in the hemolymph of many mollusks and arthropods. This is Hemocyanin subunit B from Carcinus maenas (Common shore crab).